The following is a 96-amino-acid chain: Cytochrome b (96 aa).

Transmembrane regions (helical) follow at residues leucine 1–methionine 15, tryptophan 39–isoleucine 60, and tryptophan 75–leucine 95. Histidine 45 and histidine 59 together coordinate heme b.

Belongs to the cytochrome b family. In terms of assembly, the cytochrome bc1 complex contains 3 respiratory subunits (MT-CYB, CYC1 and UQCRFS1), 2 core proteins (UQCRC1 and UQCRC2) and probably 6 low-molecular weight proteins. The cofactor is heme b.

It is found in the mitochondrion inner membrane. Component of the ubiquinol-cytochrome c reductase complex (complex III or cytochrome b-c1 complex) that is part of the mitochondrial respiratory chain. The b-c1 complex mediates electron transfer from ubiquinol to cytochrome c. Contributes to the generation of a proton gradient across the mitochondrial membrane that is then used for ATP synthesis. The sequence is that of Cytochrome b (mt-cyb) from Geophagus steindachneri (Red hump earth eater).